The sequence spans 1009 residues: DENN domain-containing protein 1A (1009 aa).

Positions 13–145 (FEVYVEVAYP…HKLPIPDPGV (133 aa)) constitute a uDENN domain. The 137-residue stretch at 162 to 298 (ELPSIPENRN…VISSLKNRLK (137 aa)) folds into the cDENN domain. Positions 300–378 (VSTTTGDGVA…DGRLDLLNSG (79 aa)) constitute a dDENN domain. An FXDXF motif motif is present at residues 381 to 385 (FSDVF). A disordered region spans residues 453 to 564 (DIAENGCAPT…TGPVPAPPDR (112 aa)). At S473 the chain carries Phosphoserine. Positions 477 to 489 (EAKDPKLREDRRP) are enriched in basic and acidic residues. Basic residues predominate over residues 500-509 (PRPHVVKRPK). T519 carries the phosphothreonine modification. 5 positions are modified to phosphoserine: S520, S523, S536, S538, and S546. The Clathrin box signature appears at 569–578 (DLLEDVFSNL). A Phosphoserine modification is found at S592. A disordered region spans residues 648–714 (IPSKPPAASP…RKTPELGIVP (67 aa)). S749 is subject to Phosphoserine. Disordered regions lie at residues 796 to 831 (STLPSRPATPNVATPFTPQFSFPPAGTPTPFPQPPL) and 928 to 1009 (RSSA…ETFE). 2 stretches are compositionally biased toward pro residues: residues 820–831 (AGTPTPFPQPPL) and 945–957 (GDPPLLPPRPPQG). Residues 972–983 (DPFEDLLQKTKQ) are compositionally biased toward basic and acidic residues. The span at 986–997 (SPSPALAPAPDS) shows a compositional bias: low complexity. A compositionally biased stretch (basic and acidic residues) spans 999–1009 (EQLRKQWETFE).

As to quaternary structure, interacts with RAB35. Interacts with clathrin and with the adapter protein complex 2, AP-2. Interacts with ITSN1 and SH3GL2. Interacts (when phosphorylated) with YWHAE. Post-translationally, phosphorylated on serine and/or threonine in an Akt-dependent manner. Phosphorylation probably regulates the guanine nucleotide exchange factor (GEF) activity, possibly by disrupting an intramolecular interaction between the DENN domain and the C-terminus of the protein, thereby relieving the autoinhibition.

Its subcellular location is the cytoplasmic vesicle. It localises to the clathrin-coated vesicle membrane. It is found in the presynaptic cell membrane. With respect to regulation, the guanine nucleotide exchange factor (GEF) activity is autoinhibited. Autoinhibition may be the result of intramolecular interaction between the DENN domain and the C-terminus, which is disrupted upon phosphorylation. Activation is regulated by Akt activation. Its function is as follows. Guanine nucleotide exchange factor (GEF) regulating clathrin-mediated endocytosis through RAB35 activation. Promotes the exchange of GDP to GTP, converting inactive GDP-bound RAB35 into its active GTP-bound form. Regulates clathrin-mediated endocytosis of synaptic vesicles and mediates exit from early endosomes. Binds phosphatidylinositol-phosphates (PtdInsPs), with some preference for PtdIns(3)P. This chain is DENN domain-containing protein 1A, found in Homo sapiens (Human).